Reading from the N-terminus, the 95-residue chain is Secretoglobin family 2A member 1 (95 aa).

The N-terminal stretch at 1-18 (MKLVFLFLLVTIPICCYA) is a signal peptide. Asn35 and Asn72 each carry an N-linked (GlcNAc...) asparagine glycan.

Belongs to the secretoglobin family. Lipophilin subfamily. Prostatein is composed of three different peptides called C1, C2 and C3. These form covalent C1:C3 (F) and C2:C3 (S) heterodimers whose non-covalent association forms tetrameric (C1:C3/C3:C2) prostatein molecules. As to expression, expressed at very low level in ventral prostate.

Its subcellular location is the secreted. Functionally, part of prostatein which is the major secretory glycoprotein of ventral prostate gland. Steroid-binding protein; can bind non-polar steroids, cholesterol and a group of small proline-rich peptides. The protein is Secretoglobin family 2A member 1 of Rattus norvegicus (Rat).